The chain runs to 437 residues: Beta-1,3-galactosyl-O-glycosyl-glycoprotein beta-1,6-N-acetylglucosaminyltransferase 3 (437 aa).

Residues 1 to 12 (MTSWQRLCWHYR) lie on the Cytoplasmic side of the membrane. A helical; Signal-anchor for type II membrane protein membrane pass occupies residues 13–30 (LWTLGCYMLLAILALKLS). The Lumenal portion of the chain corresponds to 31–437 (LRLKCDFDAM…RHKAIYGTEL (407 aa)). 4 disulfide bridges follow: C70–C227, C161–C381, C182–C209, and C390–C422. The N-linked (GlcNAc...) asparagine glycan is linked to N288.

This sequence belongs to the glycosyltransferase 14 family. Post-translationally, N-glycosylated.

It is found in the golgi apparatus membrane. The enzyme catalyses a 3-O-[beta-D-galactosyl-(1-&gt;3)-N-acetyl-alpha-D-galactosaminyl]-L-seryl-[protein] + UDP-N-acetyl-alpha-D-glucosamine = 3-O-{beta-D-galactosyl-(1-&gt;3)-[N-acetyl-beta-D-glucosaminyl-(1-&gt;6)]-N-acetyl-alpha-D-galactosaminyl}-L-seryl-[protein] + UDP + H(+). The catalysed reaction is a 3-O-[beta-D-galactosyl-(1-&gt;3)-N-acetyl-alpha-D-galactosaminyl]-L-threonyl-[protein] + UDP-N-acetyl-alpha-D-glucosamine = a 3-O-{beta-D-galactosyl-(1-&gt;3)-[N-acetyl-beta-D-glucosaminyl-(1-&gt;6)]-N-acetyl-alpha-D-galactosaminyl}-L-threonyl-[protein] + UDP + H(+). It carries out the reaction a beta-D-Gal-(1-&gt;4)-beta-D-GlcNAc-(1-&gt;3)-beta-D-Gal-(1-&gt;4)-beta-D-GlcNAc derivative + UDP-N-acetyl-alpha-D-glucosamine = a beta-D-Gal-(1-&gt;4)-beta-D-GlcNAc-(1-&gt;3)-[beta-D-GlcNAc-(1-&gt;6)]-beta-D-Gal-(1-&gt;4)-N-acetyl-beta-D-glucosaminyl derivative + UDP + H(+). It catalyses the reaction 3-O-[N-acetyl-beta-D-glucosaminyl-(1-&gt;3)-N-acetyl-alpha-D-galactosaminyl]-L-seryl-[protein] + UDP-N-acetyl-alpha-D-glucosamine = 3-O-[N-acetyl-beta-D-glucosaminyl-(1-&gt;3)-[N-acetyl-beta-D-glucosaminyl-(1-&gt;6)]-N-acetyl-alpha-D-galactosaminyl]-L-seryl-[protein] + UDP + H(+). The enzyme catalyses a 3-O-[N-acetyl-beta-D-glucosaminyl-(1-&gt;3)-N-acetyl-alpha-D-galactosaminyl]-L-threonyl-[protein] + UDP-N-acetyl-alpha-D-glucosamine = 3-O-[N-acetyl-beta-D-glucosaminyl-(1-&gt;3)-[N-acetyl-beta-D-glucosaminyl-(1-&gt;6)]-N-acetyl-alpha-D-galactosaminyl]-L-threonyl-[protein] + UDP + H(+). Its pathway is protein modification; protein glycosylation. Glycosyltransferase that can synthesize all known mucin beta 6 N-acetylglucosaminides. Mediates core 2 and core 4 O-glycan branching, 2 important steps in mucin-type biosynthesis. Also has I-branching enzyme activity by converting linear into branched poly-N-acetyllactosaminoglycans, leading to introduce the blood group I antigen during embryonic development. The sequence is that of Beta-1,3-galactosyl-O-glycosyl-glycoprotein beta-1,6-N-acetylglucosaminyltransferase 3 (Gcnt3) from Mus musculus (Mouse).